We begin with the raw amino-acid sequence, 263 residues long: Thymidylate synthase (263 aa).

DUMP-binding positions include arginine 25 and 123-124; that span reads RR. Cysteine 143 functions as the Nucleophile in the catalytic mechanism. Residues 163–166, asparagine 174, and 204–206 contribute to the dUMP site; these read RSGD and HIY. Residue aspartate 166 coordinates (6R)-5,10-methylene-5,6,7,8-tetrahydrofolate. Residue serine 262 coordinates (6R)-5,10-methylene-5,6,7,8-tetrahydrofolate.

The protein belongs to the thymidylate synthase family. Bacterial-type ThyA subfamily. As to quaternary structure, homodimer.

It localises to the cytoplasm. It catalyses the reaction dUMP + (6R)-5,10-methylene-5,6,7,8-tetrahydrofolate = 7,8-dihydrofolate + dTMP. It functions in the pathway pyrimidine metabolism; dTTP biosynthesis. Catalyzes the reductive methylation of 2'-deoxyuridine-5'-monophosphate (dUMP) to 2'-deoxythymidine-5'-monophosphate (dTMP) while utilizing 5,10-methylenetetrahydrofolate (mTHF) as the methyl donor and reductant in the reaction, yielding dihydrofolate (DHF) as a by-product. This enzymatic reaction provides an intracellular de novo source of dTMP, an essential precursor for DNA biosynthesis. The chain is Thymidylate synthase from Clostridium beijerinckii (strain ATCC 51743 / NCIMB 8052) (Clostridium acetobutylicum).